A 327-amino-acid polypeptide reads, in one-letter code: Guanine nucleotide-binding protein subunit beta-like protein 1 (327 aa).

WD repeat units follow at residues Leu16–Leu54, Arg58–Leu97, Ala103–Met145, Ala153–Val195, Val200–Leu237, Ala242–Trp282, and Gln286–Leu323.

In terms of tissue distribution, ubiquitous. Highly expressed in heart, liver, skeletal muscle, kidney, spleen, thymus and pancreas. Detected at low levels in lung, placenta and brain.

The protein resides in the cytoplasm. It localises to the nucleus. Functionally, acts as a critical regulator of DNA damage response (DDR) signaling via specifically regulating phosphatidylinositol 3-kinase-related protein kinase (PIKK) family proteins. This Homo sapiens (Human) protein is Guanine nucleotide-binding protein subunit beta-like protein 1.